The chain runs to 322 residues: Olfactory receptor 1J1 (322 aa).

Over 1-25 (MSPENQSSVSEFLLLGLPIRPEQQA) the chain is Extracellular. Asn-5 carries N-linked (GlcNAc...) asparagine glycosylation. Residues 26-49 (VFFALFLGMYLTTVLGNLLIMLLI) form a helical membrane-spanning segment. Over 50-57 (QLDSHLHT) the chain is Cytoplasmic. Residues 58–79 (PMYFFLSHLALTDISFSSVTVP) form a helical membrane-spanning segment. Topologically, residues 80–100 (KMLMNMQTQHLAVFYKGCISQ) are extracellular. A disulfide bridge connects residues Cys-97 and Cys-189. A helical membrane pass occupies residues 101–120 (TYFFIFFADLDSFLITSMAY). Over 121–139 (DRYVAICHPLHYATIMTQS) the chain is Cytoplasmic. Residues 140–158 (QCVMLVAGSWVIACACALL) traverse the membrane as a helical segment. Over 159-196 (HTLLLAQLSFCADHIIPHYFCDLGALLKLSCSDTSLNQ) the chain is Extracellular. A helical transmembrane segment spans residues 197–219 (LAIFTAALTAIMLPFLCILVSYG). Over 220–236 (HIGVTILQIPSTKGICK) the chain is Cytoplasmic. A helical transmembrane segment spans residues 237 to 259 (ALSTCGSHLSVVTIYYRTIIGLY). The Extracellular segment spans residues 260 to 272 (FLPPSSNTNDKNI). The helical transmembrane segment at 273–292 (IASVIYTAVTPMLNPFIYSL) threads the bilayer. The Cytoplasmic portion of the chain corresponds to 293–322 (RNKDIKGALRKLLSRSGAVAHACNLNTLGG).

The protein belongs to the G-protein coupled receptor 1 family.

It localises to the cell membrane. Odorant receptor. This Homo sapiens (Human) protein is Olfactory receptor 1J1.